Reading from the N-terminus, the 427-residue chain is Adenylosuccinate synthetase (427 aa).

Residues 12–18 (GDEGKGK) and 40–42 (GHT) contribute to the GTP site. The Proton acceptor role is filled by Asp-13. Residues Asp-13 and Gly-40 each contribute to the Mg(2+) site. IMP is bound by residues 13-16 (DEGK), 38-41 (NAGH), Thr-126, Arg-140, Gln-221, Thr-236, and Arg-299. His-41 acts as the Proton donor in catalysis. 295-301 (STTNRPR) contacts substrate. GTP is bound by residues Arg-301, 327 to 329 (KLD), and 409 to 411 (SLG).

This sequence belongs to the adenylosuccinate synthetase family. As to quaternary structure, homodimer. Mg(2+) serves as cofactor.

The protein resides in the cytoplasm. The catalysed reaction is IMP + L-aspartate + GTP = N(6)-(1,2-dicarboxyethyl)-AMP + GDP + phosphate + 2 H(+). Its pathway is purine metabolism; AMP biosynthesis via de novo pathway; AMP from IMP: step 1/2. In terms of biological role, plays an important role in the de novo pathway of purine nucleotide biosynthesis. Catalyzes the first committed step in the biosynthesis of AMP from IMP. The polypeptide is Adenylosuccinate synthetase (Borrelia turicatae (strain 91E135)).